A 431-amino-acid chain; its full sequence is MSVLSLKPRAGADDVDALMREIGRRARAASRRMALVPARAKDMALRAAAAAIRDAAPVILEANAADLAEARGANLPAATLDRLALTPGRVEAIAAAVEAIAGLPDPVGRQLAAFERPNGLAIERISTPLGVVGVIYESRPNVTADAGALCLKAGNAAVLRAGSESLRSAAAIARAMADGLAAQGLPAEAIQLVPTRDRAAVGAMLAGLDGCIDVIVPRGGKSLVARVQSEARVPVFAHLEGICHVFVHARADLAMAREILRNSKLRRTGICGAAETLLVDRACAGTHLAPLVADLLEAGCAVRGDAETQAVDPRVTPATEADWRTEYLDAVIAVRVVDGLDAAIDHVETYGSHHTDAIVTADEAAAERFLAEVDSAIVVHNASTQFADGGEFGFGAEIGIATGRMHARGPVGVEQLTTFKYRVHGSGQVRP.

Belongs to the gamma-glutamyl phosphate reductase family.

Its subcellular location is the cytoplasm. The catalysed reaction is L-glutamate 5-semialdehyde + phosphate + NADP(+) = L-glutamyl 5-phosphate + NADPH + H(+). Its pathway is amino-acid biosynthesis; L-proline biosynthesis; L-glutamate 5-semialdehyde from L-glutamate: step 2/2. Functionally, catalyzes the NADPH-dependent reduction of L-glutamate 5-phosphate into L-glutamate 5-semialdehyde and phosphate. The product spontaneously undergoes cyclization to form 1-pyrroline-5-carboxylate. The protein is Gamma-glutamyl phosphate reductase of Methylobacterium sp. (strain 4-46).